The chain runs to 212 residues: Peptide methionine sulfoxide reductase MsrA (212 aa).

Residues Met1–Asp14 are compositionally biased toward polar residues. The interval Met1–Thr21 is disordered. Residue Cys52 is part of the active site.

Belongs to the MsrA Met sulfoxide reductase family.

It catalyses the reaction L-methionyl-[protein] + [thioredoxin]-disulfide + H2O = L-methionyl-(S)-S-oxide-[protein] + [thioredoxin]-dithiol. The enzyme catalyses [thioredoxin]-disulfide + L-methionine + H2O = L-methionine (S)-S-oxide + [thioredoxin]-dithiol. In terms of biological role, has an important function as a repair enzyme for proteins that have been inactivated by oxidation. Catalyzes the reversible oxidation-reduction of methionine sulfoxide in proteins to methionine. The chain is Peptide methionine sulfoxide reductase MsrA from Pectobacterium atrosepticum (strain SCRI 1043 / ATCC BAA-672) (Erwinia carotovora subsp. atroseptica).